The following is a 166-amino-acid chain: MSLNIETKKVAVEEISAAIANAQTLVVAEYRGISVSSMTELRANARKEGVYLRVLKNTLARRAVQGTSFAELADQMVGPLVYAASEDAVAAAKVLHQFAKKDDKIVVKAGSYNGEVMNAAQVAELASIPSREELLSKLLFVMQAPVSGFARGLAALAEKKAGEEAA.

This sequence belongs to the universal ribosomal protein uL10 family. In terms of assembly, part of the ribosomal stalk of the 50S ribosomal subunit. The N-terminus interacts with L11 and the large rRNA to form the base of the stalk. The C-terminus forms an elongated spine to which L12 dimers bind in a sequential fashion forming a multimeric L10(L12)X complex.

In terms of biological role, forms part of the ribosomal stalk, playing a central role in the interaction of the ribosome with GTP-bound translation factors. This chain is Large ribosomal subunit protein uL10 (rplJ), found in Neisseria meningitidis serogroup A / serotype 4A (strain DSM 15465 / Z2491).